The sequence spans 461 residues: RCC1-like G exchanging factor-like protein (461 aa).

Residues 1-10 (MLAAARALRG) show a composition bias toward low complexity. Residues 1–34 (MLAAARALRGPRPRWPTPAREHWTPAGRSRSRRE) constitute a mitochondrion transit peptide. Residues 1-35 (MLAAARALRGPRPRWPTPAREHWTPAGRSRSRREA) are disordered. RCC1 repeat units lie at residues 55 to 121 (ADRV…LSSK), 125 to 188 (VTKV…VLTD), 190 to 244 (EGVF…FLTD), 245 to 297 (KGEV…ALSA), 298 to 350 (DGGV…VLNA), 352 to 408 (GHVF…ALTN), and 409 to 458 (KGEL…TLAK).

Forms a regulatory protein-RNA complex, consisting of RCC1L, NGRN, RPUSD3, RPUSD4, TRUB2, FASTKD2 and 16S mt-rRNA. Interacts with 16S mt-rRNA; this interaction is direct. Interacts with OPA1; this interaction is direct. At E8.5, broadly expressed in yolk sac placenta, decidua, and embryo, with highest levels found in the trophoblast giant cells (TGCs) and ectoplacental cone (at protein level).

The protein localises to the mitochondrion inner membrane. Its function is as follows. Guanine nucleotide exchange factor (GEF) for mitochondrial dynamin-related GTPase OPA1. Activates OPA1, by exchanging bound GDP for free GTP, and drives OPA1 and MFN1-dependent mitochondrial fusion. Plays an essential role in mitochondrial ribosome biogenesis. As a component of a functional protein-RNA module, consisting of RCC1L, NGRN, RPUSD3, RPUSD4, TRUB2, FASTKD2 and 16S mitochondrial ribosomal RNA (16S mt-rRNA), controls 16S mt-rRNA abundance and is required for intra-mitochondrial translation of core subunits of the oxidative phosphorylation system. This chain is RCC1-like G exchanging factor-like protein, found in Mus musculus (Mouse).